A 135-amino-acid chain; its full sequence is Cytochrome c2 (135 aa).

The N-terminal stretch at 1–23 is a signal peptide; that stretch reads MKKGFLAAGVFAAVAFASGAALA. Heme c-binding residues include C37, C40, H41, and M114.

This sequence belongs to the cytochrome c family. Post-translationally, binds 1 heme c group covalently per subunit.

Its function is as follows. Cytochrome c2 is found mainly in purple, non-sulfur, photosynthetic bacteria where it functions as the electron donor to the oxidized bacteriochlorophyll in the photophosphorylation pathway. However, it may also have a role in the respiratory chain and is found in some non-photosynthetic bacteria. This is Cytochrome c2 (cycA) from Rhodospirillum rubrum (strain ATCC 11170 / ATH 1.1.1 / DSM 467 / LMG 4362 / NCIMB 8255 / S1).